The chain runs to 103 residues: Small ribosomal subunit protein uS17 (103 aa).

The segment at 78–103 (SHSPKADKSAGSTAPAPEAAAKEVSE) is disordered.

Belongs to the universal ribosomal protein uS17 family. In terms of assembly, part of the 30S ribosomal subunit.

One of the primary rRNA binding proteins, it binds specifically to the 5'-end of 16S ribosomal RNA. This is Small ribosomal subunit protein uS17 from Parasynechococcus marenigrum (strain WH8102).